We begin with the raw amino-acid sequence, 266 residues long: Vitamin B12-binding protein (266 aa).

An N-terminal signal peptide occupies residues 1 to 22; it reads MAKQMFRALVALLLTLPVWLYA. The Fe/B12 periplasmic-binding domain maps to 25 to 266; sequence RVITLSPANT…QLCNALSQVN (242 aa). Cyanocob(III)alamin-binding positions include Tyr-50 and 242–246; that span reads DWFER. Cys-183 and Cys-259 are disulfide-bonded.

The protein belongs to the BtuF family. As to quaternary structure, the complex is composed of two ATP-binding proteins (BtuD), two transmembrane proteins (BtuC) and a solute-binding protein (BtuF).

Its subcellular location is the periplasm. Its function is as follows. Part of the ABC transporter complex BtuCDF involved in vitamin B12 import. Binds vitamin B12 and delivers it to the periplasmic surface of BtuC. The protein is Vitamin B12-binding protein of Salmonella paratyphi A (strain ATCC 9150 / SARB42).